Reading from the N-terminus, the 264-residue chain is S-adenosylmethionine decarboxylase proenzyme (264 aa).

The Schiff-base intermediate with substrate; via pyruvic acid role is filled by S112. Position 112 is a pyruvic acid (Ser); by autocatalysis (S112). Residue H117 is the Proton acceptor; for processing activity of the active site. Catalysis depends on C140, which acts as the Proton donor; for catalytic activity.

It belongs to the prokaryotic AdoMetDC family. Type 2 subfamily. As to quaternary structure, heterooctamer of four alpha and four beta chains arranged as a tetramer of alpha/beta heterodimers. The cofactor is pyruvate. Is synthesized initially as an inactive proenzyme. Formation of the active enzyme involves a self-maturation process in which the active site pyruvoyl group is generated from an internal serine residue via an autocatalytic post-translational modification. Two non-identical subunits are generated from the proenzyme in this reaction, and the pyruvate is formed at the N-terminus of the alpha chain, which is derived from the carboxyl end of the proenzyme. The post-translation cleavage follows an unusual pathway, termed non-hydrolytic serinolysis, in which the side chain hydroxyl group of the serine supplies its oxygen atom to form the C-terminus of the beta chain, while the remainder of the serine residue undergoes an oxidative deamination to produce ammonia and the pyruvoyl group blocking the N-terminus of the alpha chain.

It catalyses the reaction S-adenosyl-L-methionine + H(+) = S-adenosyl 3-(methylsulfanyl)propylamine + CO2. It functions in the pathway amine and polyamine biosynthesis; S-adenosylmethioninamine biosynthesis; S-adenosylmethioninamine from S-adenosyl-L-methionine: step 1/1. In terms of biological role, catalyzes the decarboxylation of S-adenosylmethionine to S-adenosylmethioninamine (dcAdoMet), the propylamine donor required for the synthesis of the polyamines spermine and spermidine from the diamine putrescine. The polypeptide is S-adenosylmethionine decarboxylase proenzyme (Shigella boydii serotype 4 (strain Sb227)).